Reading from the N-terminus, the 155-residue chain is Small ribosomal subunit protein uS7cz/uS7cy (155 aa).

The protein belongs to the universal ribosomal protein uS7 family. Part of the 30S ribosomal subunit.

It is found in the plastid. The protein localises to the chloroplast. Its function is as follows. One of the primary rRNA binding proteins, it binds directly to 16S rRNA where it nucleates assembly of the head domain of the 30S subunit. The chain is Small ribosomal subunit protein uS7cz/uS7cy (rps7-A) from Anthoceros angustus (Hornwort).